Reading from the N-terminus, the 123-residue chain is Small ribosomal subunit protein uS12 (123 aa).

Residues 1-21 (MPTIEQLVRKGRQAKPKKSKT) form a disordered region. Residues 9–20 (RKGRQAKPKKSK) show a composition bias toward basic residues. 3-methylthioaspartic acid is present on Asp89.

The protein belongs to the universal ribosomal protein uS12 family. As to quaternary structure, part of the 30S ribosomal subunit. Contacts proteins S8 and S17. May interact with IF1 in the 30S initiation complex.

In terms of biological role, with S4 and S5 plays an important role in translational accuracy. Functionally, interacts with and stabilizes bases of the 16S rRNA that are involved in tRNA selection in the A site and with the mRNA backbone. Located at the interface of the 30S and 50S subunits, it traverses the body of the 30S subunit contacting proteins on the other side and probably holding the rRNA structure together. The combined cluster of proteins S8, S12 and S17 appears to hold together the shoulder and platform of the 30S subunit. This chain is Small ribosomal subunit protein uS12, found in Bifidobacterium adolescentis (strain ATCC 15703 / DSM 20083 / NCTC 11814 / E194a).